The following is a 28-amino-acid chain: Omega-agatoxin-Aa2a (28 aa).

The protein belongs to the neurotoxin 04 (omega-agtx) family. 03 (type II/III omega-agtx) subfamily. In terms of tissue distribution, expressed by the venom gland.

It is found in the secreted. In terms of biological role, omega-agatoxin are antagonist of voltage-gated calcium channels. They block insect neuromuscular transmission presynaptically. Potent blocker of N-type calcium channels (Cav2.2/CACNA1B). This Agelenopsis aperta (North American funnel-web spider) protein is Omega-agatoxin-Aa2a.